Here is a 409-residue protein sequence, read N- to C-terminus: Autophagy-related protein 37 (409 aa).

The Cytoplasmic segment spans residues 1–313 (MSESIDRVFV…LKLIKTVIKH (313 aa)). Residues 5 to 103 (IDRVFVKAIG…LIDTMKQFAS (99 aa)) form the ACB domain. Residues 314–334 (VAIDAVIIAVLVAVIKRSIII) form a helical membrane-spanning segment. The Peroxisomal portion of the chain corresponds to 335 to 409 (PNLISNEISL…VSRIRLIKRN (75 aa)).

The protein belongs to the ATG37 family. In terms of assembly, interacts with ATG30 and PEX3. In terms of processing, phosphorylated.

The protein localises to the peroxisome membrane. Acyl-CoA binding protein which acts as the peroxisome receptor for pexophagy. Required for both micropexophagy and macropexophagy, but not for the cytoplasm to vacuole transport (Cvt) or autophagy pathways. Required for functional micropexophagic apparatus (MIPA) and relocation of ATG11 to the peroxisome-sequestering arms of the vacuole. Binds palmitoyl-CoA but not oleyl-CoA. The sequence is that of Autophagy-related protein 37 from Komagataella phaffii (strain GS115 / ATCC 20864) (Yeast).